The following is a 286-amino-acid chain: Probable ketoamine kinase YniA (286 aa).

91–93 provides a ligand contact to ATP; it reads DYL. D193 serves as the catalytic Proton acceptor.

The protein belongs to the fructosamine kinase family.

Functionally, ketoamine kinase that phosphorylates ketoamines on the third carbon of the sugar moiety to generate ketoamine 3-phosphate. The sequence is that of Probable ketoamine kinase YniA (yniA) from Escherichia coli O157:H7.